The following is a 445-amino-acid chain: Glutamyl-tRNA(Gln) amidotransferase subunit D (445 aa).

The Asparaginase/glutaminase domain occupies S93–N425. Residues T103, T179, D180, and K258 contribute to the active site.

This sequence belongs to the asparaginase 1 family. GatD subfamily. As to quaternary structure, heterodimer of GatD and GatE.

The catalysed reaction is L-glutamyl-tRNA(Gln) + L-glutamine + ATP + H2O = L-glutaminyl-tRNA(Gln) + L-glutamate + ADP + phosphate + H(+). Allows the formation of correctly charged Gln-tRNA(Gln) through the transamidation of misacylated Glu-tRNA(Gln) in organisms which lack glutaminyl-tRNA synthetase. The reaction takes place in the presence of glutamine and ATP through an activated gamma-phospho-Glu-tRNA(Gln). The GatDE system is specific for glutamate and does not act on aspartate. In Saccharolobus islandicus (strain M.16.27) (Sulfolobus islandicus), this protein is Glutamyl-tRNA(Gln) amidotransferase subunit D.